A 295-amino-acid polypeptide reads, in one-letter code: Ethanolamine ammonia-lyase small subunit (295 aa).

Adenosylcob(III)alamin contacts are provided by valine 207, glutamate 228, and cysteine 258.

The protein belongs to the EutC family. In terms of assembly, the basic unit is a heterodimer which dimerizes to form tetramers. The heterotetramers trimerize; 6 large subunits form a core ring with 6 small subunits projecting outwards. Adenosylcob(III)alamin is required as a cofactor.

The protein localises to the bacterial microcompartment. The catalysed reaction is ethanolamine = acetaldehyde + NH4(+). It participates in amine and polyamine degradation; ethanolamine degradation. In terms of biological role, catalyzes the deamination of various vicinal amino-alcohols to oxo compounds. Allows this organism to utilize ethanolamine as the sole source of nitrogen and carbon in the presence of external vitamin B12. The protein is Ethanolamine ammonia-lyase small subunit of Escherichia coli O81 (strain ED1a).